The sequence spans 96 residues: UPF0235 protein VV2877 (96 aa).

Belongs to the UPF0235 family.

The chain is UPF0235 protein VV2877 from Vibrio vulnificus (strain YJ016).